Consider the following 329-residue polypeptide: Quinolinate synthase (329 aa).

Iminosuccinate is bound by residues His44 and Ser61. Cys106 contributes to the [4Fe-4S] cluster binding site. Iminosuccinate is bound by residues 132 to 134 and Ser149; that span reads YIN. A [4Fe-4S] cluster-binding site is contributed by Cys192. Iminosuccinate contacts are provided by residues 218–220 and Thr235; that span reads HPE. Position 285 (Cys285) interacts with [4Fe-4S] cluster.

The protein belongs to the quinolinate synthase family. Type 2 subfamily. It depends on [4Fe-4S] cluster as a cofactor.

It is found in the plastid. Its subcellular location is the cyanelle. The catalysed reaction is iminosuccinate + dihydroxyacetone phosphate = quinolinate + phosphate + 2 H2O + H(+). Its pathway is cofactor biosynthesis; NAD(+) biosynthesis; quinolinate from iminoaspartate: step 1/1. In terms of biological role, catalyzes the condensation of iminoaspartate with dihydroxyacetone phosphate to form quinolinate. This chain is Quinolinate synthase, found in Cyanophora paradoxa.